We begin with the raw amino-acid sequence, 319 residues long: Acetyl-coenzyme A carboxylase carboxyl transferase subunit alpha (319 aa).

Residues 38 to 293 (HALQDKLRMR…KAVLLNELDA (256 aa)) form the CoA carboxyltransferase C-terminal domain.

Belongs to the AccA family. In terms of assembly, acetyl-CoA carboxylase is a heterohexamer composed of biotin carboxyl carrier protein (AccB), biotin carboxylase (AccC) and two subunits each of ACCase subunit alpha (AccA) and ACCase subunit beta (AccD).

Its subcellular location is the cytoplasm. It catalyses the reaction N(6)-carboxybiotinyl-L-lysyl-[protein] + acetyl-CoA = N(6)-biotinyl-L-lysyl-[protein] + malonyl-CoA. It functions in the pathway lipid metabolism; malonyl-CoA biosynthesis; malonyl-CoA from acetyl-CoA: step 1/1. Functionally, component of the acetyl coenzyme A carboxylase (ACC) complex. First, biotin carboxylase catalyzes the carboxylation of biotin on its carrier protein (BCCP) and then the CO(2) group is transferred by the carboxyltransferase to acetyl-CoA to form malonyl-CoA. The protein is Acetyl-coenzyme A carboxylase carboxyl transferase subunit alpha of Stenotrophomonas maltophilia (strain K279a).